A 362-amino-acid polypeptide reads, in one-letter code: tRNA 2-selenouridine synthase (362 aa).

In terms of domain architecture, Rhodanese spans 12 to 135 (FLNDTPLLDV…LRRFLIDEME (124 aa)). Cys-95 functions as the S-selanylcysteine intermediate in the catalytic mechanism.

Belongs to the SelU family. In terms of assembly, monomer.

The enzyme catalyses 5-methylaminomethyl-2-thiouridine(34) in tRNA + selenophosphate + (2E)-geranyl diphosphate + H2O + H(+) = 5-methylaminomethyl-2-selenouridine(34) in tRNA + (2E)-thiogeraniol + phosphate + diphosphate. It carries out the reaction 5-methylaminomethyl-2-thiouridine(34) in tRNA + (2E)-geranyl diphosphate = 5-methylaminomethyl-S-(2E)-geranyl-thiouridine(34) in tRNA + diphosphate. The catalysed reaction is 5-methylaminomethyl-S-(2E)-geranyl-thiouridine(34) in tRNA + selenophosphate + H(+) = 5-methylaminomethyl-2-(Se-phospho)selenouridine(34) in tRNA + (2E)-thiogeraniol. It catalyses the reaction 5-methylaminomethyl-2-(Se-phospho)selenouridine(34) in tRNA + H2O = 5-methylaminomethyl-2-selenouridine(34) in tRNA + phosphate. Involved in the post-transcriptional modification of the uridine at the wobble position (U34) of tRNA(Lys), tRNA(Glu) and tRNA(Gln). Catalyzes the conversion of 2-thiouridine (S2U-RNA) to 2-selenouridine (Se2U-RNA). Acts in a two-step process involving geranylation of 2-thiouridine (S2U) to S-geranyl-2-thiouridine (geS2U) and subsequent selenation of the latter derivative to 2-selenouridine (Se2U) in the tRNA chain. The protein is tRNA 2-selenouridine synthase of Alcanivorax borkumensis (strain ATCC 700651 / DSM 11573 / NCIMB 13689 / SK2).